The primary structure comprises 155 residues: Deoxyuridine 5'-triphosphate nucleotidohydrolase (155 aa).

Substrate is bound by residues 74 to 76, Asn87, and 91 to 93; these read RSG and LID.

This sequence belongs to the dUTPase family. Mg(2+) is required as a cofactor.

It carries out the reaction dUTP + H2O = dUMP + diphosphate + H(+). It participates in pyrimidine metabolism; dUMP biosynthesis; dUMP from dCTP (dUTP route): step 2/2. This enzyme is involved in nucleotide metabolism: it produces dUMP, the immediate precursor of thymidine nucleotides and it decreases the intracellular concentration of dUTP so that uracil cannot be incorporated into DNA. This is Deoxyuridine 5'-triphosphate nucleotidohydrolase from Xanthomonas oryzae pv. oryzae (strain MAFF 311018).